A 70-amino-acid chain; its full sequence is MRAIISLLLISAMVFSMIAAVPEEEGLQLSEDERGGCLPHNRFCNALSGPRCCSGLRCKELSIWDSTCLG.

A signal peptide spans 1–20 (MRAIISLLLISAMVFSMIAA). The propeptide occupies 21 to 34 (VPEEEGLQLSEDER). Intrachain disulfides connect cysteine 37-cysteine 53, cysteine 44-cysteine 58, and cysteine 52-cysteine 68. Leucine 69 carries the post-translational modification Leucine amide.

Belongs to the neurotoxin 01 (U2-agtx) family. Expressed by the venom gland.

Its subcellular location is the secreted. Functionally, insect active toxin causing rapid but reversible paralysis in crickets. No activity shown in mammals. Does not show effect on mammalian voltage-gated calcium channels. This Agelena orientalis (Funnel-web spider) protein is U2-agatoxin-Ao1j.